A 155-amino-acid polypeptide reads, in one-letter code: DNA gyrase inhibitor (155 aa).

The protein belongs to the DNA gyrase inhibitor family. Interacts with DNA gyrase.

It is found in the cytoplasm. Inhibits the supercoiling activity of DNA gyrase. Acts by inhibiting DNA gyrase at an early step, prior to (or at the step of) binding of DNA by the gyrase. It protects cells against toxins that target DNA gyrase, by inhibiting activity of these toxins and reducing the formation of lethal double-strand breaks in the cell. The protein is DNA gyrase inhibitor of Edwardsiella ictaluri (strain 93-146).